A 218-amino-acid chain; its full sequence is Pyridoxine/pyridoxamine 5'-phosphate oxidase (218 aa).

Substrate contacts are provided by residues 14 to 17 (RREY) and K72. FMN-binding positions include 67-72 (RIVLLK), 82-83 (YT), R88, K89, and Q111. Residues Y129, R133, and S137 each coordinate substrate. Residues 146–147 (QS) and W191 each bind FMN. A substrate-binding site is contributed by 197–199 (RLH). R201 is a binding site for FMN.

This sequence belongs to the pyridoxamine 5'-phosphate oxidase family. In terms of assembly, homodimer. The cofactor is FMN.

It carries out the reaction pyridoxamine 5'-phosphate + O2 + H2O = pyridoxal 5'-phosphate + H2O2 + NH4(+). It catalyses the reaction pyridoxine 5'-phosphate + O2 = pyridoxal 5'-phosphate + H2O2. Its pathway is cofactor metabolism; pyridoxal 5'-phosphate salvage; pyridoxal 5'-phosphate from pyridoxamine 5'-phosphate: step 1/1. It functions in the pathway cofactor metabolism; pyridoxal 5'-phosphate salvage; pyridoxal 5'-phosphate from pyridoxine 5'-phosphate: step 1/1. Functionally, catalyzes the oxidation of either pyridoxine 5'-phosphate (PNP) or pyridoxamine 5'-phosphate (PMP) into pyridoxal 5'-phosphate (PLP). The sequence is that of Pyridoxine/pyridoxamine 5'-phosphate oxidase from Escherichia coli (strain 55989 / EAEC).